Here is a 217-residue protein sequence, read N- to C-terminus: Transmembrane emp24 domain-containing protein p24delta6 (217 aa).

A signal peptide spans 1-26; sequence MAISPVLFIGLIYLAGGGSLFPGVEA. The Lumenal segment spans residues 27–186; it reads IWLTVPESGE…INEKTNTRVN (160 aa). In terms of domain architecture, GOLD spans 36–152; it reads ERCVYEEIQA…IEGVELEIRR (117 aa). Asn84 and Asn116 each carry an N-linked (GlcNAc...) asparagine glycan. Residues 138–160 are a coiled coil; that stretch reads AKKEKIEGVELEIRRSTEYASAI. Omega-N-methylated arginine is present on residues Arg170 and Arg175. A helical membrane pass occupies residues 187–207; sequence QLGLMSLGVAIVVSISQVLYL. Residues 208-217 are Cytoplasmic-facing; the sequence is KRYFLKKKLI. The COPII vesicle coat-binding motif lies at 210-211; it reads YF. A COPI vesicle coat-binding motif is present at residues 210–217; that stretch reads YFLKKKLI.

The protein belongs to the EMP24/GP25L family. As to quaternary structure, probably oligomerizes with other members of the EMP24/GP25L family. Associates with the COPI vesicle coat (coatomer). Associates with the COPII vesicle coat (coatomer).

Its subcellular location is the endoplasmic reticulum membrane. Its function is as follows. Involved in vesicular protein trafficking. Mainly functions in the early secretory pathway. Thought to act as cargo receptor at the lumenal side for incorporation of secretory cargo molecules into transport vesicles and to be involved in vesicle coat formation at the cytoplasmic side. This is Transmembrane emp24 domain-containing protein p24delta6 from Arabidopsis thaliana (Mouse-ear cress).